A 147-amino-acid polypeptide reads, in one-letter code: Small ribosomal subunit protein uS12 (147 aa).

Belongs to the universal ribosomal protein uS12 family. Part of the 30S ribosomal subunit.

Its function is as follows. With S4 and S5 plays an important role in translational accuracy. Located at the interface of the 30S and 50S subunits. This is Small ribosomal subunit protein uS12 from Methanococcus aeolicus (strain ATCC BAA-1280 / DSM 17508 / OCM 812 / Nankai-3).